We begin with the raw amino-acid sequence, 46 residues long: Endochitinase 1A (46 aa).

Belongs to the glycosyl hydrolase 19 family. Chitinase class I subfamily.

It carries out the reaction Random endo-hydrolysis of N-acetyl-beta-D-glucosaminide (1-&gt;4)-beta-linkages in chitin and chitodextrins.. Its function is as follows. Defense against chitin-containing fungal and bacterial pathogens. The sequence is that of Endochitinase 1A from Arachis hypogaea (Peanut).